A 68-amino-acid chain; its full sequence is MSELNTKTPPAANQASDPEEKGKPGSIKKAEEEEEIDIDLTAPETEKAALAIQGKFRRFQKRKKDSSS.

Residues 1-16 show a composition bias toward polar residues; sequence MSELNTKTPPAANQAS. The tract at residues 1-42 is disordered; that stretch reads MSELNTKTPPAANQASDPEEKGKPGSIKKAEEEEEIDIDLTA. Phosphothreonine is present on T8. The span at 18 to 31 shows a compositional bias: basic and acidic residues; sequence PEEKGKPGSIKKAE. The IQ domain maps to 45–68; that stretch reads TEKAALAIQGKFRRFQKRKKDSSS.

Belongs to the PCP4 family. Expressed in laminar and nuclear structures of the CNS.

This Mus musculus (Mouse) protein is Purkinje cell protein 4-like protein 1 (Pcp4l1).